Here is a 144-residue protein sequence, read N- to C-terminus: Ig heavy chain V region MOPC 141 (144 aa).

The N-terminal stretch at Met1–Ser19 is a signal peptide. Residues Gln20 to Thr130 enclose the Ig-like domain.

The protein is Ig heavy chain V region MOPC 141 of Mus musculus (Mouse).